The chain runs to 127 residues: UPF0389 protein GA21628 (127 aa).

Residues 69 to 88 traverse the membrane as a helical segment; the sequence is IRLANIMIALTVIGCGIMVY.

This sequence belongs to the UPF0389 family.

It localises to the membrane. In Drosophila pseudoobscura pseudoobscura (Fruit fly), this protein is UPF0389 protein GA21628.